Here is a 401-residue protein sequence, read N- to C-terminus: Imidazolonepropionase (401 aa).

Fe(3+)-binding residues include His70 and His72. Residues His70 and His72 each contribute to the Zn(2+) site. Residues Arg79, Tyr142, and His175 each coordinate 4-imidazolone-5-propanoate. N-formimidoyl-L-glutamate is bound at residue Tyr142. His240 is a Fe(3+) binding site. Residue His240 coordinates Zn(2+). Residue Gln243 coordinates 4-imidazolone-5-propanoate. Asp315 contacts Fe(3+). Asp315 provides a ligand contact to Zn(2+). Residues Asn317 and Gly319 each coordinate N-formimidoyl-L-glutamate. Thr320 serves as a coordination point for 4-imidazolone-5-propanoate.

It belongs to the metallo-dependent hydrolases superfamily. HutI family. The cofactor is Zn(2+). Fe(3+) serves as cofactor.

It is found in the cytoplasm. It carries out the reaction 4-imidazolone-5-propanoate + H2O = N-formimidoyl-L-glutamate. Its pathway is amino-acid degradation; L-histidine degradation into L-glutamate; N-formimidoyl-L-glutamate from L-histidine: step 3/3. In terms of biological role, catalyzes the hydrolytic cleavage of the carbon-nitrogen bond in imidazolone-5-propanoate to yield N-formimidoyl-L-glutamate. It is the third step in the universal histidine degradation pathway. The chain is Imidazolonepropionase from Caulobacter vibrioides (strain ATCC 19089 / CIP 103742 / CB 15) (Caulobacter crescentus).